Reading from the N-terminus, the 482-residue chain is Glutamyl-tRNA(Gln) amidotransferase subunit A (482 aa).

Residues K80 and S159 each act as charge relay system in the active site. Catalysis depends on S183, which acts as the Acyl-ester intermediate.

This sequence belongs to the amidase family. GatA subfamily. In terms of assembly, heterotrimer of A, B and C subunits.

The enzyme catalyses L-glutamyl-tRNA(Gln) + L-glutamine + ATP + H2O = L-glutaminyl-tRNA(Gln) + L-glutamate + ADP + phosphate + H(+). Allows the formation of correctly charged Gln-tRNA(Gln) through the transamidation of misacylated Glu-tRNA(Gln) in organisms which lack glutaminyl-tRNA synthetase. The reaction takes place in the presence of glutamine and ATP through an activated gamma-phospho-Glu-tRNA(Gln). The polypeptide is Glutamyl-tRNA(Gln) amidotransferase subunit A (Neorickettsia sennetsu (strain ATCC VR-367 / Miyayama) (Ehrlichia sennetsu)).